Consider the following 320-residue polypeptide: Cytochrome f (320 aa).

The N-terminal stretch at 1-35 is a signal peptide; the sequence is MQTRNNFSWIKEQITRSISVSLMIYIITRASISNA. Residues tyrosine 36, cysteine 56, cysteine 59, and histidine 60 each coordinate heme. A helical membrane pass occupies residues 286 to 306; sequence VQGLLFFLASVILAQIFLVLK.

Belongs to the cytochrome f family. As to quaternary structure, the 4 large subunits of the cytochrome b6-f complex are cytochrome b6, subunit IV (17 kDa polypeptide, petD), cytochrome f and the Rieske protein, while the 4 small subunits are PetG, PetL, PetM and PetN. The complex functions as a dimer. Heme is required as a cofactor.

The protein localises to the plastid. The protein resides in the chloroplast thylakoid membrane. Component of the cytochrome b6-f complex, which mediates electron transfer between photosystem II (PSII) and photosystem I (PSI), cyclic electron flow around PSI, and state transitions. The protein is Cytochrome f of Lactuca sativa (Garden lettuce).